A 314-amino-acid polypeptide reads, in one-letter code: Short-chain dehydrogenase/reductase sthC (314 aa).

The span at 1 to 10 shows a compositional bias: polar residues; it reads MAPAETTGNV. The segment at 1 to 27 is disordered; that stretch reads MAPAETTGNVQRPEAGKQSMGSFWTQM. Residues Val56, Lys80, Asp105, Asn132, and Arg167 each coordinate NADP(+). Catalysis depends on Ser191, which acts as the Proton donor. Positions 222 and 226 each coordinate NADP(+). Tyr222 functions as the Proton acceptor in the catalytic mechanism. Lys226 (lowers pKa of active site Tyr) is an active-site residue.

This sequence belongs to the short-chain dehydrogenases/reductases (SDR) family.

It catalyses the reaction dehydroprobetaenone I + AH2 = probetaenone I + A. The catalysed reaction is betaenone C + AH2 = betaenone B + A. It functions in the pathway mycotoxin biosynthesis. In terms of biological role, short-chain dehydrogenase/reductase; part of the gene cluster that mediates the biosynthesis of the phytotoxin stemphyloxin II. The first step of the pathway is the synthesis of dehydroprobetaenone I by the polyketide synthase sthA and the enoyl reductase sthE via condensation of one acetyl-CoA starter unit with 7 malonyl-CoA units and 5 methylations. The C-terminal reductase (R) domain of sthA catalyzes the reductive release of the polyketide chain. Because sthA lacks a designated enoylreductase (ER) domain, the required activity is provided the enoyl reductase sthE. The short-chain dehydrogenase/reductase sthC then catalyzes reduction of dehydroprobetaenone I to probetaenone I. The cytochrome P450 monooxygenase sthF catalyzes successive epoxidation, oxidation (resulting from epoxide opening) and hydroxylation to install a tertiary alcohol in the decaline ring to yield betaenone C from dehydroprobetaenone I and betaenone B from probetaenone I. The FAD-linked oxidoreductase sthB is responsible for the conversion of betaenone C to betaenone A via an intramolecular aldol reaction between C-1 and C-17 to form the bridged tricyclic system in betaenone A. Finally, the cytochrome P450 monooxygenase sthD catalyzes the hydroxylation of C-15 to afford the final metabolite stemphyloxin II. In Phaeosphaeria nodorum (strain SN15 / ATCC MYA-4574 / FGSC 10173) (Glume blotch fungus), this protein is Short-chain dehydrogenase/reductase sthC.